Reading from the N-terminus, the 684-residue chain is Glycine--tRNA ligase beta subunit (684 aa).

This sequence belongs to the class-II aminoacyl-tRNA synthetase family. As to quaternary structure, tetramer of two alpha and two beta subunits.

It is found in the cytoplasm. It catalyses the reaction tRNA(Gly) + glycine + ATP = glycyl-tRNA(Gly) + AMP + diphosphate. The chain is Glycine--tRNA ligase beta subunit from Pseudomonas fluorescens (strain ATCC BAA-477 / NRRL B-23932 / Pf-5).